Consider the following 294-residue polypeptide: Tryptophan 2,3-dioxygenase (294 aa).

Substrate contacts are provided by residues 63–67, Y125, and R129; that span reads FIIQH. H252 is a binding site for heme. Residue T266 coordinates substrate.

The protein belongs to the tryptophan 2,3-dioxygenase family. Homotetramer. The cofactor is heme.

It catalyses the reaction L-tryptophan + O2 = N-formyl-L-kynurenine. It participates in amino-acid degradation; L-tryptophan degradation via kynurenine pathway; L-kynurenine from L-tryptophan: step 1/2. Functionally, heme-dependent dioxygenase that catalyzes the oxidative cleavage of the L-tryptophan (L-Trp) pyrrole ring and converts L-tryptophan to N-formyl-L-kynurenine. Catalyzes the oxidative cleavage of the indole moiety. The chain is Tryptophan 2,3-dioxygenase from Polaromonas sp. (strain JS666 / ATCC BAA-500).